The chain runs to 199 residues: MKQSHFFAHLSRMKLINRWPLMRNVRTENVSEHSLQVAMVAHALAAIKNRKFGGQLNAERIALLAMYHDASEVLTGDLPTPVKYFNSQIAQEYKAIEKIAQQKLVDMAPDELHDIFAPLIDENAWSKEEQAIVKQADALCAYLKCLEELSAGNNEFRLAKTRLEKTLELRRSQEMDYFMAVFVPSFHLSLDEISQDSPL.

Substrate contacts are provided by residues arginine 18–tryptophan 19 and histidine 33. Residues valine 30–tyrosine 142 form the HD domain. Positions 33, 68, and 69 each coordinate a divalent metal cation. Residues aspartate 69, aspartate 77 to threonine 80, and aspartate 137 contribute to the substrate site. Residue aspartate 137 participates in a divalent metal cation binding.

This sequence belongs to the 5DNU family. In terms of assembly, homodimer. It depends on a divalent metal cation as a cofactor.

It is found in the cytoplasm. It carries out the reaction a 2'-deoxyribonucleoside 5'-phosphate + H2O = a 2'-deoxyribonucleoside + phosphate. Its function is as follows. Catalyzes the strictly specific dephosphorylation of 2'-deoxyribonucleoside 5'-monophosphates. This is 5'-deoxynucleotidase YfbR from Salmonella typhi.